Reading from the N-terminus, the 87-residue chain is HssA/B-like protein 55 (87 aa).

Residues 1 to 13 (MTILSAITSISRP) are compositionally biased toward polar residues. The disordered stretch occupies residues 1 to 31 (MTILSAITSISRPNKSSKSVVSSNGGSSLSM). Residues 14–31 (NKSSKSVVSSNGGSSLSM) are compositionally biased toward low complexity.

Belongs to the hssA/B family.

The protein is HssA/B-like protein 55 (hssl55) of Dictyostelium discoideum (Social amoeba).